The primary structure comprises 166 residues: Signal peptidase complex catalytic subunit SEC11 (166 aa).

The Cytoplasmic portion of the chain corresponds to 1 to 9 (MNIRQQLTQ). The helical; Signal-anchor for type II membrane protein transmembrane segment at 10-30 (LLTLGYVFASAFMLWKTLSVV) threads the bilayer. Over 31–166 (ANLHSPIVVV…LGLSSLFSNE (136 aa)) the chain is Lumenal. Catalysis depends on charge relay system residues serine 44, histidine 83, and aspartate 108. The tract at residues 152-163 (GLLGLLGLSSLF) is C-terminal short (CTS) helix.

It belongs to the peptidase S26B family. Component of the signal peptidase complex (SPC) composed of a catalytic subunit SEC11 and three accessory subunits SPC1, SPC2 and SPC3. The complex induces a local thinning of the ER membrane which is used to measure the length of the signal peptide (SP) h-region of protein substrates. This ensures the selectivity of the complex towards h-regions shorter than 18-20 amino acids. SPC associates with the translocon complex.

The protein resides in the endoplasmic reticulum membrane. It catalyses the reaction Cleavage of hydrophobic, N-terminal signal or leader sequences from secreted and periplasmic proteins.. Its function is as follows. Catalytic component of the signal peptidase complex (SPC) which catalyzes the cleavage of N-terminal signal sequences from nascent proteins as they are translocated into the lumen of the endoplasmic reticulum. Specifically cleaves N-terminal signal peptides that contain a hydrophobic alpha-helix (h-region) shorter than 18-20 amino acids. This chain is Signal peptidase complex catalytic subunit SEC11 (SEC11), found in Lodderomyces elongisporus (strain ATCC 11503 / CBS 2605 / JCM 1781 / NBRC 1676 / NRRL YB-4239) (Yeast).